The sequence spans 155 residues: SsrA-binding protein (155 aa).

The tract at residues 132 to 155 is disordered; the sequence is DKREDLKQKQMKRDVDRAIKDHMR.

The protein belongs to the SmpB family.

The protein resides in the cytoplasm. Required for rescue of stalled ribosomes mediated by trans-translation. Binds to transfer-messenger RNA (tmRNA), required for stable association of tmRNA with ribosomes. tmRNA and SmpB together mimic tRNA shape, replacing the anticodon stem-loop with SmpB. tmRNA is encoded by the ssrA gene; the 2 termini fold to resemble tRNA(Ala) and it encodes a 'tag peptide', a short internal open reading frame. During trans-translation Ala-aminoacylated tmRNA acts like a tRNA, entering the A-site of stalled ribosomes, displacing the stalled mRNA. The ribosome then switches to translate the ORF on the tmRNA; the nascent peptide is terminated with the 'tag peptide' encoded by the tmRNA and targeted for degradation. The ribosome is freed to recommence translation, which seems to be the essential function of trans-translation. The polypeptide is SsrA-binding protein (Oceanobacillus iheyensis (strain DSM 14371 / CIP 107618 / JCM 11309 / KCTC 3954 / HTE831)).